The primary structure comprises 1137 residues: DNA-directed RNA polymerase III subunit RPC2 (1137 aa).

A C4-type zinc finger spans residues 1084 to 1099 (DVCRTCGRMAYCSWCH). Zn(2+)-binding residues include Cys-1086, Cys-1089, Cys-1098, and Cys-1101.

This sequence belongs to the RNA polymerase beta chain family. As to quaternary structure, component of the RNA polymerase III (Pol III) complex consisting of 17 subunits.

It localises to the nucleus. It carries out the reaction RNA(n) + a ribonucleoside 5'-triphosphate = RNA(n+1) + diphosphate. Its function is as follows. DNA-dependent RNA polymerase catalyzes the transcription of DNA into RNA using the four ribonucleoside triphosphates as substrates. Second largest core component of RNA polymerase III which synthesizes small RNAs, such as 5S rRNA and tRNAs. Proposed to contribute to the polymerase catalytic activity and forms the polymerase active center together with the largest subunit. Pol III is composed of mobile elements and Polr3B is part of the core element with the central large cleft and probably a clamp element that moves to open and close the cleft. This is DNA-directed RNA polymerase III subunit RPC2 from Drosophila melanogaster (Fruit fly).